Here is a 207-residue protein sequence, read N- to C-terminus: Granulocyte colony-stimulating factor (207 aa).

The signal sequence occupies residues 1–30 (MAGPATQSPMKLMALQLLLWHSALWTVQEA). 2 disulfides stabilise this stretch: Cys-69/Cys-75 and Cys-97/Cys-107. O-linked (GalNAc...) threonine glycosylation is present at Thr-166.

The protein belongs to the IL-6 superfamily. Monomer. In terms of processing, O-glycan consists of Gal-GalNAc disaccharide which can be modified with up to two sialic acid residues (done in recombinantly expressed G-CSF from CHO cells).

The protein resides in the secreted. Its function is as follows. Granulocyte/macrophage colony-stimulating factors are cytokines that act in hematopoiesis by controlling the production, differentiation, and function of 2 related white cell populations of the blood, the granulocytes and the monocytes-macrophages. This CSF induces granulocytes. In Homo sapiens (Human), this protein is Granulocyte colony-stimulating factor (CSF3).